A 58-amino-acid chain; its full sequence is UPF0391 membrane protein Sfri_4000 (58 aa).

2 consecutive transmembrane segments (helical) span residues 6-26 and 27-47; these read LMFL…IAGA and AAGI…ISLV.

The protein belongs to the UPF0391 family.

Its subcellular location is the cell membrane. This Shewanella frigidimarina (strain NCIMB 400) protein is UPF0391 membrane protein Sfri_4000.